We begin with the raw amino-acid sequence, 342 residues long: N-acetyl-gamma-glutamyl-phosphate reductase (342 aa).

Cysteine 147 is a catalytic residue.

It belongs to the NAGSA dehydrogenase family. Type 1 subfamily.

It localises to the cytoplasm. The catalysed reaction is N-acetyl-L-glutamate 5-semialdehyde + phosphate + NADP(+) = N-acetyl-L-glutamyl 5-phosphate + NADPH + H(+). It functions in the pathway amino-acid biosynthesis; L-arginine biosynthesis; N(2)-acetyl-L-ornithine from L-glutamate: step 3/4. Its function is as follows. Catalyzes the NADPH-dependent reduction of N-acetyl-5-glutamyl phosphate to yield N-acetyl-L-glutamate 5-semialdehyde. This chain is N-acetyl-gamma-glutamyl-phosphate reductase, found in Methanosphaera stadtmanae (strain ATCC 43021 / DSM 3091 / JCM 11832 / MCB-3).